A 490-amino-acid chain; its full sequence is Glutamate--tRNA ligase (490 aa).

The short motif at 9 to 19 (PSPTGLQHIGG) is the 'HIGH' region element. The 'KMSKS' region motif lies at 251 to 255 (KLSKR). Residue lysine 254 participates in ATP binding.

Belongs to the class-I aminoacyl-tRNA synthetase family. Glutamate--tRNA ligase type 1 subfamily. In terms of assembly, monomer.

It localises to the cytoplasm. It catalyses the reaction tRNA(Glu) + L-glutamate + ATP = L-glutamyl-tRNA(Glu) + AMP + diphosphate. Catalyzes the attachment of glutamate to tRNA(Glu) in a two-step reaction: glutamate is first activated by ATP to form Glu-AMP and then transferred to the acceptor end of tRNA(Glu). This chain is Glutamate--tRNA ligase, found in Borreliella afzelii (strain PKo) (Borrelia afzelii).